The chain runs to 29 residues: Trypsin inhibitor 4 (29 aa).

3 disulfide bridges follow: C3–C20, C10–C22, and C16–C28.

Belongs to the protease inhibitor I7 (squash-type serine protease inhibitor) family.

The protein resides in the secreted. Its function is as follows. Strongly inhibits trypsin, weakly inhibits chymotrypsin. This chain is Trypsin inhibitor 4, found in Cyclanthera pedata (Achocha).